The primary structure comprises 334 residues: MHVIAVDAMGGDNAPQAIVEGVNQALAEFKDIEIQLYGDEAKIKNYLIANERVSIVHTDEKINSDDEPVKAIRKKKKASMVLGAQAVKEKAADAVISAGNTGALLAAGLFVVGRIKGVERPGLMSTMPSFTGQPFDMLDLGANAENTANHLHQYAILGSFYAKNVRGIATPRVGLLNNGTEKTKGDSLRKEAFELLSQEASINFIGNVEAREIMSGAADVVVADGFTGNAVLKAIEGTGLGTMKTLKSAIMNGGLKAKLGAFLLKDRLKGMKETMDYSSAGGAVLFGLKAPVVKCHGSSDAKAVYYTIKQVRKMLDTKVVEQLVDAFDPKEEVN.

The protein belongs to the PlsX family. As to quaternary structure, homodimer. Probably interacts with PlsY.

The protein localises to the cytoplasm. It carries out the reaction a fatty acyl-[ACP] + phosphate = an acyl phosphate + holo-[ACP]. Its pathway is lipid metabolism; phospholipid metabolism. Catalyzes the reversible formation of acyl-phosphate (acyl-PO(4)) from acyl-[acyl-carrier-protein] (acyl-ACP). This enzyme utilizes acyl-ACP as fatty acyl donor, but not acyl-CoA. The chain is Phosphate acyltransferase from Streptococcus thermophilus (strain CNRZ 1066).